The sequence spans 432 residues: MTKDFKISVSAALISALFSSPYAFAEEPEDGNDGIPRLSAVQISPNVDPKLGVGLYPAKPILRQENPKLPPRGPQGPEKKRARLAEAIQPQVLGGLDARAKGIHSIAIGATAEAAKPAAVAVGAGSIATGVNSVAIGPLSKALGDSAVTYGASSTAQKDGVAIGARASASDTGVAVGFNSKVDAQNSVAIGHSSHVAADHGYSIAIGDLSKTDRENSVSIGHESLNRQLTHLAAGTKDNDAVNVAQLKKEMAETLENARKETLAQSNDVLDAAKKHSNSVARTTLETAEEHANKKSAEALVSAKVYADSNSSHTLKTANSYTDVTVSSSTKKAISESNQYTDHKFSQLDNRLDKLDKRVDKGLASSAALNSLFQPYGVGKVNFTAGVGGYRSSQALAIGSGYRVNESVALKAGVAYAGSSNVMYNASFNIEW.

The N-terminal stretch at 1-25 (MTKDFKISVSAALISALFSSPYAFA) is a signal peptide. Residues 26-340 (EEPEDGNDGI…KKAISESNQY (315 aa)) are surface exposed passenger domain. Positions 242–263 (VNVAQLKKEMAETLENARKETL) form a coiled coil. Residues 341–379 (TDHKFSQLDNRLDKLDKRVDKGLASSAALNSLFQPYGVG) are outer membrane translocation of the passenger domain. The next 4 beta stranded transmembrane spans lie at 379–389 (GKVNFTAGVGG), 393–404 (SQALAIGSGYRV), 411–417 (KAGVAYA), and 421–432 (NVMYNASFNIEW). Positions 380 to 432 (KVNFTAGVGGYRSSQALAIGSGYRVNESVALKAGVAYAGSSNVMYNASFNIEW) are translocator domain.

This sequence belongs to the autotransporter-2 (AT-2) (TC 1.B.40) family. Homotrimer.

The protein localises to the cell surface. It is found in the cell outer membrane. Its function is as follows. Collagen-binding outer membrane protein forming a fibrillar matrix on the bacterial cell surface. Promotes attachment to eukaryotic cells and after invasion, is the major adhesin in infected tissue. Constitutes an alternative uptake pathway under conditions in which invasin synthesis is repressed. This is Adhesin YadA (yadA) from Yersinia pseudotuberculosis serotype I (strain IP32953).